A 462-amino-acid polypeptide reads, in one-letter code: MGSIEPPNASSCLVYQTITEFADFPDHDQKLWWHSTAPMFAEMLKVAGYDIHSRYKALGLYQKFIIPFLGVYPTKTNDRWLSILTRYGTPFELSLNCTHSVVRYTFEPINAATGSLKDPFNTHAIWDALDTLIPLQKGIDLEFFAHLKRDLTVNDQDTAYLLEKKKVGGQIRTQNKLALDLKGGEFVLKAYIYPALKSLATGKPVQELMFDSVHRLSHQYPTLAAPLRKLEEYVHSRGTSSTASPRLISCDLCDPRQSRIKIYLLELNVSLESMEDLWTLGGRRNDTQTLAGLEMIRELWDLINLPTGILSYPEPYLKLGEVPNEQLPLMANYTLHHDDPMPEPQVYFTTFGMNDGRVTDGLATFFRRHGYTHMLQTYRDSLRAYYPHVDHDTVNYLHAYISFSYRKGSPYLSVYLQSFETGDWPISSFGAPILEPVSKKMCRGHPVSFEVPLTKQQVVASE.

L-tryptophan is bound by residues Ile83–Leu84 and Glu92. Arg103, Lys189, and Tyr191 together coordinate substrate. L-tryptophan is bound by residues Tyr193 and Arg246. Arg259, Lys261, Tyr263, Gln345, and Tyr347 together coordinate substrate.

This sequence belongs to the tryptophan dimethylallyltransferase family. Homodimer.

It catalyses the reaction L-tryptophan + dimethylallyl diphosphate = 4-(3-methylbut-2-enyl)-L-tryptophan + diphosphate. It participates in alkaloid biosynthesis; ergot alkaloid biosynthesis. Functionally, tryptophan dimethylallyltransferase; part of the gene cluster that mediates the biosynthesis of isofumigaclavines, fungal ergot alkaloids. The tryptophan dimethylallyltransferase ifgA catalyzes the first step of ergot alkaloid biosynthesis by condensing dimethylallyl diphosphate (DMAP) and tryptophan to form 4-dimethylallyl-L-tryptophan. The second step is catalyzed by the methyltransferase ifgB that methylates 4-dimethylallyl-L-tryptophan in the presence of S-adenosyl-L-methionine, resulting in the formation of N-methyl-dimethylallyl-L-tryptophan. The catalase ifgD and the FAD-dependent oxidoreductase ifgC then transform N-methyl-dimethylallyl-L-tryptophan to chanoclavine-I which is further oxidized by ifgE in the presence of NAD(+), resulting in the formation of chanoclavine-I aldehyde. The chanoclavine-I aldehyde reductases ifgG and/or fgaOx3 reduce chanoclavine-I aldehyde to dihydrochanoclavine-I aldehyde that spontaneously dehydrates to form 6,8-dimethyl-6,7-didehydroergoline. The festuclavine dehydrogenases ifgF1 and/or ifgF2 then catalyze the reduction of 6,8-dimethyl-6,7-didehydroergoline to form festuclavine. Hydrolysis of festuclavine by a yet undetermined cytochrome P450 monooxygenase (called ifgH) then leads to the formation of isofumigaclavine B which is in turn acetylated by ifgI to isofumigaclavine A. Penicillium roqueforti has interestingly at least two sets of genes for the consumption of chanoclavine-I aldehyde on three different loci, the OYEs ifgG/fgaOx3 and the festuclavine synthase homologs ifgF1/ifgF2. The reason for the duplication of these genes is unclear, probably to ensure the conversion of chanoclavine-I aldehyde by differential gene expression under various environmental conditions. This Penicillium roqueforti (strain FM164) protein is Tryptophan dimethylallyltransferase ifgA.